The following is a 194-amino-acid chain: Protein GrpE (194 aa).

It belongs to the GrpE family. Homodimer.

Its subcellular location is the cytoplasm. Its function is as follows. Participates actively in the response to hyperosmotic and heat shock by preventing the aggregation of stress-denatured proteins, in association with DnaK and GrpE. It is the nucleotide exchange factor for DnaK and may function as a thermosensor. Unfolded proteins bind initially to DnaJ; upon interaction with the DnaJ-bound protein, DnaK hydrolyzes its bound ATP, resulting in the formation of a stable complex. GrpE releases ADP from DnaK; ATP binding to DnaK triggers the release of the substrate protein, thus completing the reaction cycle. Several rounds of ATP-dependent interactions between DnaJ, DnaK and GrpE are required for fully efficient folding. The polypeptide is Protein GrpE (Aliivibrio fischeri (strain MJ11) (Vibrio fischeri)).